We begin with the raw amino-acid sequence, 278 residues long: Phosphatidylglycerol--prolipoprotein diacylglyceryl transferase (278 aa).

A run of 4 helical transmembrane segments spans residues 12–32, 44–64, 86–106, and 113–133; these read FGPL…LIGL, LENG…VIGA, IWEG…TLIL, and QPFL…QAIG. Arg-134 serves as a coordination point for a 1,2-diacyl-sn-glycero-3-phospho-(1'-sn-glycerol). 3 consecutive transmembrane segments (helical) span residues 173–193, 203–223, and 246–266; these read PTFL…LVLF, FPAG…RIWI, and IAQL…WWLK.

It belongs to the Lgt family.

The protein localises to the cell inner membrane. It catalyses the reaction L-cysteinyl-[prolipoprotein] + a 1,2-diacyl-sn-glycero-3-phospho-(1'-sn-glycerol) = an S-1,2-diacyl-sn-glyceryl-L-cysteinyl-[prolipoprotein] + sn-glycerol 1-phosphate + H(+). The protein operates within protein modification; lipoprotein biosynthesis (diacylglyceryl transfer). Its function is as follows. Catalyzes the transfer of the diacylglyceryl group from phosphatidylglycerol to the sulfhydryl group of the N-terminal cysteine of a prolipoprotein, the first step in the formation of mature lipoproteins. The chain is Phosphatidylglycerol--prolipoprotein diacylglyceryl transferase from Parasynechococcus marenigrum (strain WH8102).